A 372-amino-acid polypeptide reads, in one-letter code: Cell division protein FtsZ 1 (372 aa).

Residues 51 to 55 (GAGCN), 138 to 140 (GTG), Glu169, Arg173, and Asp216 each bind GTP. The interval 352-372 (EETPAPSEEETTPVKIDIPEL) is disordered.

It belongs to the FtsZ family. As to quaternary structure, homodimer. Polymerizes to form a dynamic ring structure in a strictly GTP-dependent manner. Interacts directly with several other division proteins.

The protein localises to the cytoplasm. Essential cell division protein that forms a contractile ring structure (Z ring) at the future cell division site. The regulation of the ring assembly controls the timing and the location of cell division. One of the functions of the FtsZ ring is to recruit other cell division proteins to the septum to produce a new cell wall between the dividing cells. Binds GTP and shows GTPase activity. The protein is Cell division protein FtsZ 1 of Pyrococcus horikoshii (strain ATCC 700860 / DSM 12428 / JCM 9974 / NBRC 100139 / OT-3).